A 177-amino-acid chain; its full sequence is Inorganic pyrophosphatase (177 aa).

Residues Lys31, Arg45, and Tyr57 each coordinate substrate. Residues Asp67, Asp72, and Asp104 each contribute to the Mg(2+) site. Tyr141 contributes to the substrate binding site.

It belongs to the PPase family. In terms of assembly, homohexamer. Also forms homotrimers, but the trimeric form is 23% less active than the hexamer. In fact, likely forms a dimer of trimers. Mg(2+) serves as cofactor.

It is found in the cytoplasm. It carries out the reaction diphosphate + H2O = 2 phosphate + H(+). With respect to regulation, inhibited by sodium fluoride (NaF) in vitro, similarly to other class A type inorganic pyrophosphatases. Catalyzes the hydrolysis of inorganic pyrophosphate (PPi) forming two phosphate ions. The hydrolysis of PPi by inorganic pyrophosphatase releases a considerable amount of energy that can drive unfavorable biochemical transformations to completion. Is not active on nucleoside triphosphates (ATP, TTP, GTP, or CTP) or nucleoside diphosphate (ADP). This Haloferax volcanii (strain ATCC 29605 / DSM 3757 / JCM 8879 / NBRC 14742 / NCIMB 2012 / VKM B-1768 / DS2) (Halobacterium volcanii) protein is Inorganic pyrophosphatase.